Here is a 130-residue protein sequence, read N- to C-terminus: Small ribosomal subunit protein uS9 (130 aa).

Positions V111 to R130 are disordered. Positions P116 to R130 are enriched in basic residues.

This sequence belongs to the universal ribosomal protein uS9 family.

This is Small ribosomal subunit protein uS9 from Lactococcus lactis subsp. lactis (strain IL1403) (Streptococcus lactis).